The primary structure comprises 421 residues: Medium-chain specific acyl-CoA dehydrogenase, mitochondrial (421 aa).

The transit peptide at 1 to 25 (MAAGFGRCCRVLRSISRFHWRSQHT) directs the protein to the mitochondrion. Residue K69 is modified to N6-acetyllysine; alternate. Position 69 is an N6-succinyllysine; alternate (K69). An FAD-binding site is contributed by 158 to 167 (YCVTEPGAGS). S167 lines the octanoyl-CoA pocket. K179 bears the N6-succinyllysine mark. 191–193 (WIT) lines the FAD pocket. K212, K217, K259, and K271 each carry N6-acetyllysine; alternate. Residues K212, K217, K259, and K271 each carry the N6-succinyllysine; alternate modification. An octanoyl-CoA-binding site is contributed by D278. K279 bears the N6-acetyllysine mark. Residue R281 coordinates octanoyl-CoA. The residue at position 301 (K301) is an N6-acetyllysine. Residues 306 to 308 (RKT) and 316 to 317 (HQ) each bind FAD. T351 is modified (phosphothreonine). FAD-binding positions include 374–378 (QILGG) and 401–405 (EGTSQ). E401 serves as a coordination point for octanoyl-CoA. E401 serves as the catalytic Proton acceptor.

This sequence belongs to the acyl-CoA dehydrogenase family. As to quaternary structure, homotetramer. Interacts with the heterodimeric electron transfer flavoprotein ETF. FAD is required as a cofactor. Acetylated. Could occur at proximity of the cofactor-binding sites and reduce the catalytic activity. Could be deacetylated by SIRT3.

The protein localises to the mitochondrion matrix. It carries out the reaction a medium-chain 2,3-saturated fatty acyl-CoA + oxidized [electron-transfer flavoprotein] + H(+) = a medium-chain (2E)-enoyl-CoA + reduced [electron-transfer flavoprotein]. The enzyme catalyses pentanoyl-CoA + oxidized [electron-transfer flavoprotein] + H(+) = (2E)-pentenoyl-CoA + reduced [electron-transfer flavoprotein]. It catalyses the reaction hexanoyl-CoA + oxidized [electron-transfer flavoprotein] + H(+) = (2E)-hexenoyl-CoA + reduced [electron-transfer flavoprotein]. The catalysed reaction is octanoyl-CoA + oxidized [electron-transfer flavoprotein] + H(+) = (2E)-octenoyl-CoA + reduced [electron-transfer flavoprotein]. It carries out the reaction decanoyl-CoA + oxidized [electron-transfer flavoprotein] + H(+) = (2E)-decenoyl-CoA + reduced [electron-transfer flavoprotein]. The enzyme catalyses dodecanoyl-CoA + oxidized [electron-transfer flavoprotein] + H(+) = (2E)-dodecenoyl-CoA + reduced [electron-transfer flavoprotein]. It catalyses the reaction tetradecanoyl-CoA + oxidized [electron-transfer flavoprotein] + H(+) = (2E)-tetradecenoyl-CoA + reduced [electron-transfer flavoprotein]. The catalysed reaction is oxidized [electron-transfer flavoprotein] + hexadecanoyl-CoA + H(+) = (2E)-hexadecenoyl-CoA + reduced [electron-transfer flavoprotein]. Its pathway is lipid metabolism; mitochondrial fatty acid beta-oxidation. In terms of biological role, medium-chain specific acyl-CoA dehydrogenase is one of the acyl-CoA dehydrogenases that catalyze the first step of mitochondrial fatty acid beta-oxidation, an aerobic process breaking down fatty acids into acetyl-CoA and allowing the production of energy from fats. The first step of fatty acid beta-oxidation consists in the removal of one hydrogen from C-2 and C-3 of the straight-chain fatty acyl-CoA thioester, resulting in the formation of trans-2-enoyl-CoA. Electron transfer flavoprotein (ETF) is the electron acceptor that transfers electrons to the main mitochondrial respiratory chain via ETF-ubiquinone oxidoreductase (ETF dehydrogenase). Among the different mitochondrial acyl-CoA dehydrogenases, medium-chain specific acyl-CoA dehydrogenase acts specifically on acyl-CoAs with saturated 6 to 12 carbons long primary chains. The sequence is that of Medium-chain specific acyl-CoA dehydrogenase, mitochondrial from Homo sapiens (Human).